The primary structure comprises 505 residues: Maturase K (505 aa).

The protein belongs to the intron maturase 2 family. MatK subfamily.

It is found in the plastid. The protein resides in the chloroplast. Usually encoded in the trnK tRNA gene intron. Probably assists in splicing its own and other chloroplast group II introns. This chain is Maturase K, found in Chiococca alba (West Indian milkberry).